The following is a 512-amino-acid chain: MNFLLLTFIVLPLCSHAKFSIVFPQSQKGNWKNVPSSYHYCPSSSDQNWHNDLLGITMKVKMPKTHKAIQADGWMCHAAKWITTCDFRWYGPKYITHSIHSIQPTSEQCKESIKQTKQGTWMSPGFPPQNCGYATVTDSVAVVVQATPHHVLVDEYTGEWIDSQFPNGKCETEECETVHNSTVWYSDYKVTGLCDATLVDTEITFFSEDGKKESIGKPNTGYRSNYFAYEKGDKVCKMNYCKHAGVRLPSGVWFEFVDQDVYAAAKLPECPVGATISAPTQTSVDVSLILDVERILDYSLCQETWSKIRSKQPVSPVDLSYLAPKNPGTGPAFTIINGTLKYFETRYIRIDIDNPIISKMVGKISGSQTERELWTEWFPYEGVEIGPNGILKTPTGYKFPLFMIGHGMLDSDLHKTSQAEVFEHPHLAEAPKQLPEEETLFFGDTGISKNPVELIEGWFSSWKSTVVTFFFAIGVFILLYVVARIVIAVRYRYQGSNNKRIYNDIEMSRFRK.

Residues 1–17 form the signal peptide; that stretch reads MNFLLLTFIVLPLCSHA. Residues 18-468 lie on the Virion surface side of the membrane; sequence KFSIVFPQSQ…FSSWKSTVVT (451 aa). 6 disulfide bridges follow: Cys41-Cys301, Cys76-Cys109, Cys85-Cys131, Cys170-Cys175, Cys194-Cys241, and Cys236-Cys270. Positions 54–173 are fusion peptide; the sequence is LGITMKVKMP…QFPNGKCETE (120 aa). N-linked (GlcNAc...) asparagine; by host glycosylation occurs at Asn180. The tract at residues 260-310 is trimerization; sequence DVYAAAKLPECPVGATISAPTQTSVDVSLILDVERILDYSLCQETWSKIRS. Residue Asn337 is glycosylated (N-linked (GlcNAc...) asparagine; by host). Residues 384 to 406 are trimerization; it reads EIGPNGILKTPTGYKFPLFMIGH. A helical membrane pass occupies residues 469-489; that stretch reads FFFAIGVFILLYVVARIVIAV. Over 490 to 512 the chain is Intravirion; sequence RYRYQGSNNKRIYNDIEMSRFRK.

The protein belongs to the vesiculovirus glycoprotein family. As to quaternary structure, homotrimer. Interacts with host LDL at target cell surface. In terms of processing, glycosylated by host. Palmitoylated by host.

It localises to the virion membrane. It is found in the host membrane. Functionally, attaches the virus to host receptors, inducing clathrin-dependent endocytosis of the virion. In the endosome, the acidic pH induces conformational changes in the glycoprotein trimer, which trigger fusion between virus and endosomal membrane. This chain is Glycoprotein (G), found in Cocal virus (COCV).